We begin with the raw amino-acid sequence, 378 residues long: Acetylornithine deacetylase (378 aa).

His-76 lines the Zn(2+) pocket. Residue Asp-78 is part of the active site. Asp-108 contributes to the Zn(2+) binding site. Glu-140 is a catalytic residue. Zn(2+) contacts are provided by Glu-141, Glu-165, and His-351.

Belongs to the peptidase M20A family. ArgE subfamily. As to quaternary structure, homodimer. Requires Zn(2+) as cofactor. The cofactor is Co(2+). Glutathione is required as a cofactor.

Its subcellular location is the cytoplasm. The enzyme catalyses N(2)-acetyl-L-ornithine + H2O = L-ornithine + acetate. Its pathway is amino-acid biosynthesis; L-arginine biosynthesis; L-ornithine from N(2)-acetyl-L-ornithine (linear): step 1/1. Functionally, catalyzes the hydrolysis of the amide bond of N(2)-acetylated L-amino acids. Cleaves the acetyl group from N-acetyl-L-ornithine to form L-ornithine, an intermediate in L-arginine biosynthesis pathway, and a branchpoint in the synthesis of polyamines. This chain is Acetylornithine deacetylase, found in Vibrio atlanticus (strain LGP32) (Vibrio splendidus (strain Mel32)).